The chain runs to 719 residues: 2'-5'-oligoadenylate synthase 2 (719 aa).

A lipid anchor (N-myristoyl glycine) is attached at Gly2. OAS domain stretches follow at residues 11–335 (VPAQ…SWNV) and 343–683 (TPGH…WKVP). The residue at position 378 (Lys378) is an N6-acetyllysine. Ser396 is a binding site for ATP. Residues Asp408, Asp410, and Asp481 each coordinate Mg(2+). Residues Arg544 and Lys547 each contribute to the ATP site.

The protein belongs to the 2-5A synthase family. In terms of assembly, homodimer. Mg(2+) serves as cofactor. Post-translationally, myristoylation is not essential for its activity. Glycosylated. Glycosylation is essential for its activity.

It localises to the cytoplasm. Its subcellular location is the perinuclear region. The enzyme catalyses 3 ATP = 5'-triphosphoadenylyl-(2'-&gt;5')-adenylyl-(2'-&gt;5')-adenosine + 2 diphosphate. Its activity is regulated as follows. Produced as a latent enzyme which is activated by double stranded RNA (dsRNA) generated during the course of viral infection. The dsRNA activator must be at least 15 nucleotides long, and no modification of the 2'-hydroxyl group is tolerated. ssRNA or dsDNA do not act as activators. Strongly inhibited by copper, iron and zinc ions. Partially inhibited by cobalt and nickel ions. Its function is as follows. Interferon-induced, dsRNA-activated antiviral enzyme which plays a critical role in cellular innate antiviral response. Activated by detection of double stranded RNA (dsRNA): polymerizes higher oligomers of 2'-5'-oligoadenylates (2-5A) from ATP which then bind to the inactive monomeric form of ribonuclease L (RNASEL) leading to its dimerization and subsequent activation. Activation of RNASEL leads to degradation of cellular as well as viral RNA, resulting in the inhibition of protein synthesis, thus terminating viral replication. Can mediate the antiviral effect via the classical RNASEL-dependent pathway or an alternative antiviral pathway independent of RNASEL. In addition, it may also play a role in other cellular processes such as apoptosis, cell growth, differentiation and gene regulation. May act as a negative regulator of lactation, stopping lactation in virally infected mammary gland lobules, thereby preventing transmission of viruses to neonates. Non-infected lobules would not be affected, allowing efficient pup feeding during infection. In Homo sapiens (Human), this protein is 2'-5'-oligoadenylate synthase 2.